The sequence spans 130 residues: Small ribosomal subunit protein uS9 (130 aa).

The protein belongs to the universal ribosomal protein uS9 family.

In Teredinibacter turnerae (strain ATCC 39867 / T7901), this protein is Small ribosomal subunit protein uS9.